Here is a 181-residue protein sequence, read N- to C-terminus: Protein GrpE (181 aa).

Over residues 1–10 the composition is skewed to polar residues; the sequence is MENTQENPAT. The tract at residues 1–33 is disordered; sequence MENTQENPATPSAEDIGSEKQAAQGAAPAAEAA. Low complexity predominate over residues 21–33; the sequence is QAAQGAAPAAEAA.

This sequence belongs to the GrpE family. In terms of assembly, homodimer.

The protein resides in the cytoplasm. Its function is as follows. Participates actively in the response to hyperosmotic and heat shock by preventing the aggregation of stress-denatured proteins, in association with DnaK and GrpE. It is the nucleotide exchange factor for DnaK and may function as a thermosensor. Unfolded proteins bind initially to DnaJ; upon interaction with the DnaJ-bound protein, DnaK hydrolyzes its bound ATP, resulting in the formation of a stable complex. GrpE releases ADP from DnaK; ATP binding to DnaK triggers the release of the substrate protein, thus completing the reaction cycle. Several rounds of ATP-dependent interactions between DnaJ, DnaK and GrpE are required for fully efficient folding. This is Protein GrpE from Burkholderia cenocepacia (strain ATCC BAA-245 / DSM 16553 / LMG 16656 / NCTC 13227 / J2315 / CF5610) (Burkholderia cepacia (strain J2315)).